The chain runs to 86 residues: Large ribosomal subunit protein bL27 (86 aa).

Over residues 1–10 the composition is skewed to gly residues; the sequence is MAQKKGGGST. The disordered stretch occupies residues 1 to 21; it reads MAQKKGGGSTRNGRDSESKRL.

It belongs to the bacterial ribosomal protein bL27 family.

In Bordetella petrii (strain ATCC BAA-461 / DSM 12804 / CCUG 43448), this protein is Large ribosomal subunit protein bL27.